We begin with the raw amino-acid sequence, 119 residues long: MPRVKRGVTARARHKKVIAAAKGYRGRRGNVFRIAKQAVMRAGQYAYRDRRNKKRTFRALWITRINAAVREQGMSYSVFIAGLKKASIDLDRKVLADLAVRDKAGFAAIVQQAKAALSA.

The protein belongs to the bacterial ribosomal protein bL20 family.

In terms of biological role, binds directly to 23S ribosomal RNA and is necessary for the in vitro assembly process of the 50S ribosomal subunit. It is not involved in the protein synthesizing functions of that subunit. The sequence is that of Large ribosomal subunit protein bL20 from Bordetella petrii (strain ATCC BAA-461 / DSM 12804 / CCUG 43448).